A 119-amino-acid polypeptide reads, in one-letter code: Ribonuclease P protein component (119 aa).

This sequence belongs to the RnpA family. As to quaternary structure, consists of a catalytic RNA component (M1 or rnpB) and a protein subunit.

It catalyses the reaction Endonucleolytic cleavage of RNA, removing 5'-extranucleotides from tRNA precursor.. Its function is as follows. RNaseP catalyzes the removal of the 5'-leader sequence from pre-tRNA to produce the mature 5'-terminus. It can also cleave other RNA substrates such as 4.5S RNA. The protein component plays an auxiliary but essential role in vivo by binding to the 5'-leader sequence and broadening the substrate specificity of the ribozyme. The polypeptide is Ribonuclease P protein component (Escherichia coli O6:H1 (strain CFT073 / ATCC 700928 / UPEC)).